The chain runs to 182 residues: Ribulose bisphosphate carboxylase small subunit, chloroplastic 4 (182 aa).

Residues 1–41 (MSAAMMNKSVVLSKQCTKPAATPKVVTSKRSFASTVANKNR) constitute a chloroplast transit peptide.

The protein belongs to the RuBisCO small chain family. Heterohexadecamer of 8 large and 8 small subunits.

Its subcellular location is the plastid. The protein resides in the chloroplast. Its function is as follows. RuBisCO catalyzes two reactions: the carboxylation of D-ribulose 1,5-bisphosphate, the primary event in carbon dioxide fixation, as well as the oxidative fragmentation of the pentose substrate. Both reactions occur simultaneously and in competition at the same active site. Although the small subunit is not catalytic it is essential for maximal activity. This is Ribulose bisphosphate carboxylase small subunit, chloroplastic 4 from Acetabularia acetabulum (Mermaid's wine glass).